Consider the following 969-residue polypeptide: Liprin-beta-1 (969 aa).

Residue Ser-37 is modified to Phosphoserine. Thr-39 bears the Phosphothreonine mark. At Ser-40 the chain carries Phosphoserine. A coiled-coil region spans residues 99 to 310; that stretch reads GDVYQERLAR…CLSRYRKMQD (212 aa). Lys-291 is subject to N6-acetyllysine. 3 disordered regions span residues 342-361, 381-407, and 424-482; these read DLERSTSSTPGMGSPSRDLL, LLPPSVDVDTCEKPKLPTKPETSFEEG, and GVST…RKAR. Positions 346 to 358 are enriched in low complexity; it reads STSSTPGMGSPSR. Residues Ser-403 and Ser-435 each carry the phosphoserine modification. A compositionally biased stretch (low complexity) spans 426-438; it reads STSSLQKSSSLGN. Basic and acidic residues predominate over residues 439–452; it reads LKKEASDGTDKAPT. A Glycyl lysine isopeptide (Lys-Gly) (interchain with G-Cter in SUMO2) cross-link involves residue Lys-440. Phosphoserine is present on Ser-500. Residues 518–529 show a composition bias toward polar residues; it reads AGTSRSKGSQGT. Residues 518–593 form a disordered region; the sequence is AGTSRSKGSQ…PRLGWSRDLG (76 aa). Ser-538 bears the Phosphoserine mark. Basic residues predominate over residues 543 to 557; sequence KKSRGIMRLFGKLRR. Phosphoserine is present on residues Ser-560 and Ser-595. 2 SAM domains span residues 606–670 and 678–741; these read WTKE…LGSE and LDFN…LRIN. A phosphoserine mark is found at Ser-753 and Ser-757. An SAM 3 domain is found at 763–835; that stretch reads VQQWTNHRVM…ATHFNLLIGA (73 aa). Ser-957, Ser-959, and Ser-961 each carry phosphoserine. Thr-963 carries the post-translational modification Phosphothreonine.

The protein belongs to the liprin family. Liprin-beta subfamily. In terms of assembly, forms homodimers and heterodimers. Interacts with S100A4 in a Ca(2+)-dependent mode. Part of a cortical microtubule stabilization complex (CMSC) composed of KANK1, PPFIA1, PPFIBP1, ERC1/ELKS, PHLDB2/LL5beta, CLASPs, KIF21A and possibly additional interactors; within CMSCs KANK1 and PHLDB2/LL5beta seem to be the core components for recruiting microtubule-binding proteins KIF21A and CLASPs, whereas PPFIA1, PPFIBP1 and ERC1/ELKS serve as scaffolds for protein clustering. Interacts with KANK1 (via CC1 domain, residues 244-339).

The protein resides in the cytoplasm. The protein localises to the cell cortex. Its function is as follows. May regulate the disassembly of focal adhesions. Did not bind receptor-like tyrosine phosphatases type 2A. This chain is Liprin-beta-1 (Ppfibp1), found in Mus musculus (Mouse).